Consider the following 488-residue polypeptide: Acetyl-coenzyme A carboxylase carboxyl transferase subunit beta, chloroplastic (488 aa).

Residues 221–488 (LWIQCDNCYA…FFPLNKNEIK (268 aa)) enclose the CoA carboxyltransferase N-terminal domain. The Zn(2+) site is built by C225, C228, C244, and C247. The segment at 225–247 (CDNCYALIYKKALKLKLNVCEQC) adopts a C4-type zinc-finger fold.

The protein belongs to the AccD/PCCB family. As to quaternary structure, acetyl-CoA carboxylase is a heterohexamer composed of biotin carboxyl carrier protein, biotin carboxylase and 2 subunits each of ACCase subunit alpha and ACCase plastid-coded subunit beta (accD). Zn(2+) is required as a cofactor.

The protein localises to the plastid. The protein resides in the chloroplast stroma. The catalysed reaction is N(6)-carboxybiotinyl-L-lysyl-[protein] + acetyl-CoA = N(6)-biotinyl-L-lysyl-[protein] + malonyl-CoA. It functions in the pathway lipid metabolism; malonyl-CoA biosynthesis; malonyl-CoA from acetyl-CoA: step 1/1. In terms of biological role, component of the acetyl coenzyme A carboxylase (ACC) complex. Biotin carboxylase (BC) catalyzes the carboxylation of biotin on its carrier protein (BCCP) and then the CO(2) group is transferred by the transcarboxylase to acetyl-CoA to form malonyl-CoA. The protein is Acetyl-coenzyme A carboxylase carboxyl transferase subunit beta, chloroplastic of Aethionema grandiflorum (Persian stone-cress).